Consider the following 731-residue polypeptide: Putative pentatricopeptide repeat-containing protein At1g17630 (731 aa).

PPR repeat units lie at residues 88-118 (SGSL…VSLV), 122-156 (DLRL…GLTG), 157-191 (DGYI…GLKE), 192-222 (NLHV…MPVR), 223-257 (NRMS…EFKP), 258-292 (DEVT…GNAV), 293-327 (SGEA…GFEE), 328-358 (YLPS…IRNK), 359-393 (GIES…NHVC), 398-432 (NVVT…KVLA), 433-467 (NSVT…SMSE), 468-498 (NILV…IRDK), 499-533 (DLIS…GFHP), 534-569 (DGIA…GLEP), and 570-600 (QQEH…MPME). A type E motif region spans residues 605-680 (VLGALLNSCR…VSGSSWIEVK (76 aa)). A type E(+) motif region spans residues 681 to 711 (KKKYKFSSGSIVQSEFETIYPVLEDLVSHML).

It belongs to the PPR family. PCMP-E subfamily.

This is Putative pentatricopeptide repeat-containing protein At1g17630 (PCMP-E72) from Arabidopsis thaliana (Mouse-ear cress).